A 299-amino-acid polypeptide reads, in one-letter code: Oxygen-dependent coproporphyrinogen-III oxidase (299 aa).

Residue serine 92 coordinates substrate. Residues histidine 96 and histidine 106 each contribute to the a divalent metal cation site. Histidine 106 acts as the Proton donor in catalysis. Asparagine 108–arginine 110 is a binding site for substrate. Residues histidine 145 and histidine 175 each contribute to the a divalent metal cation site. Positions tyrosine 240–glutamate 275 are important for dimerization. Glycine 258–arginine 260 is a substrate binding site.

The protein belongs to the aerobic coproporphyrinogen-III oxidase family. As to quaternary structure, homodimer. It depends on a divalent metal cation as a cofactor.

It localises to the cytoplasm. The enzyme catalyses coproporphyrinogen III + O2 + 2 H(+) = protoporphyrinogen IX + 2 CO2 + 2 H2O. Its pathway is porphyrin-containing compound metabolism; protoporphyrin-IX biosynthesis; protoporphyrinogen-IX from coproporphyrinogen-III (O2 route): step 1/1. Its function is as follows. Involved in the heme biosynthesis. Catalyzes the aerobic oxidative decarboxylation of propionate groups of rings A and B of coproporphyrinogen-III to yield the vinyl groups in protoporphyrinogen-IX. The protein is Oxygen-dependent coproporphyrinogen-III oxidase of Salmonella newport (strain SL254).